The following is a 165-amino-acid chain: Endoribonuclease YbeY (165 aa).

Zn(2+) contacts are provided by histidine 130, histidine 134, and histidine 140.

This sequence belongs to the endoribonuclease YbeY family. Requires Zn(2+) as cofactor.

It is found in the cytoplasm. Its function is as follows. Single strand-specific metallo-endoribonuclease involved in late-stage 70S ribosome quality control and in maturation of the 3' terminus of the 16S rRNA. The polypeptide is Endoribonuclease YbeY (Streptococcus thermophilus (strain CNRZ 1066)).